Reading from the N-terminus, the 1269-residue chain is Protein cramped-like (1269 aa).

Residues 1 to 12 are compositionally biased toward gly residues; that stretch reads MTVKLGDGGSGE. Positions 1-165 are disordered; that stretch reads MTVKLGDGGS…GKKVRRQWES (165 aa). Composition is skewed to basic and acidic residues over residues 13–24 and 43–52; these read DGLKKLGKRAAD and SGTKRDEKTP. Pro residues predominate over residues 59-74; that stretch reads PPAPPGAPQAPSPPQG. A compositionally biased stretch (gly residues) spans 105–123; it reads GNAGGSGPRGKGAEGGGSS. Low complexity predominate over residues 124–147; sequence SGNVSGVAPAAPAGGSRSSSRNLG. A compositionally biased stretch (basic and acidic residues) spans 151–165; that stretch reads GEKEEGKKVRRQWES. In terms of domain architecture, SANT spans 161-224; the sequence is RQWESWSTED…FYYRTWHKIT (64 aa). S307 carries the post-translational modification Phosphoserine. 6 disordered regions span residues 450–541, 581–666, 757–827, 976–1034, 1055–1092, and 1115–1157; these read IQSG…PGAL, DTRP…EVPA, VRPA…NDSD, EGLS…DSFQ, IPLS…SQGE, and VPLS…PSDS. A compositionally biased stretch (low complexity) spans 485–507; sequence SSGESSPESAPGEGAALSLSSPD. Basic and acidic residues-rich tracts occupy residues 508–518 and 526–535; these read APDRPPPRHQD and TPAEGRDSPT. Polar residues-rich tracts occupy residues 757-767, 774-806, and 982-1002; these read VRPAQEEQSMT, TVSS…SSGL, and SPLS…TGTH. Composition is skewed to low complexity over residues 1055 to 1070 and 1125 to 1140; these read IPLS…LSPP and SDSS…SPQP. At S1268 the chain carries Phosphoserine.

It belongs to the cramped family.

Its subcellular location is the nucleus. This Homo sapiens (Human) protein is Protein cramped-like.